Consider the following 275-residue polypeptide: AA9 family lytic polysaccharide monooxygenase D (275 aa).

Positions 1-17 (MKLSLLAIAAIAPFVSA) are cleaved as a signal peptide. Positions 18 and 101 each coordinate Cu(2+). The cysteines at positions 67 and 189 are disulfide-linked. His-176 contacts O2. Residue Tyr-186 participates in Cu(2+) binding. A glycan (N-linked (GlcNAc...) asparagine) is linked at Asn-220.

Belongs to the polysaccharide monooxygenase AA9 family. It depends on Cu(2+) as a cofactor.

It is found in the secreted. It catalyses the reaction [(1-&gt;4)-beta-D-glucosyl]n+m + reduced acceptor + O2 = 4-dehydro-beta-D-glucosyl-[(1-&gt;4)-beta-D-glucosyl]n-1 + [(1-&gt;4)-beta-D-glucosyl]m + acceptor + H2O.. Functionally, lytic polysaccharide monooxygenase (LPMO) that depolymerizes crystalline and amorphous polysaccharides via the oxidation of scissile alpha- or beta-(1-4)-glycosidic bonds, yielding C1 or C4 oxidation products. Catalysis by LPMOs requires the reduction of the active-site copper from Cu(II) to Cu(I) by a reducing agent and H(2)O(2) or O(2) as a cosubstrate. In Aspergillus tamarii, this protein is AA9 family lytic polysaccharide monooxygenase D.